Reading from the N-terminus, the 318-residue chain is Homoserine kinase (318 aa).

Position 97–107 (97–107 (PIGSGLGSSAC)) interacts with ATP.

The protein belongs to the GHMP kinase family. Homoserine kinase subfamily.

It is found in the cytoplasm. It catalyses the reaction L-homoserine + ATP = O-phospho-L-homoserine + ADP + H(+). The protein operates within amino-acid biosynthesis; L-threonine biosynthesis; L-threonine from L-aspartate: step 4/5. Its function is as follows. Catalyzes the ATP-dependent phosphorylation of L-homoserine to L-homoserine phosphate. The polypeptide is Homoserine kinase (Vibrio atlanticus (strain LGP32) (Vibrio splendidus (strain Mel32))).